A 490-amino-acid polypeptide reads, in one-letter code: MQLTKDTEISTINRQMSDFSELSQILPLHQISKIKDILENENPLPKEKLASHLTMIILMANLASQKRKDVPVKRSTFLKYQRSISKTLQYDSSTKTVSFEYHLKDPSKLIKGLEDVVSPYRFVVGVHEKPDDVMSHLSAVHMRKEAGRKRDLGNKINDEITKIAETQETIWGFVGKTMDLIEARTTRPTTKAAYNLLLQATFMNCCRADDLKNTDIKTFEVIPDKHLGRMLRAFVPETKTGTRFVYFFPCKGRCDPLLALDSYLQWTDPIPKTRTTDEDARYDYQLLRNSLLGSYDGFISKQSDESIFKIPNGPKAHLGRHVTASYLSNNEMDKEATLYGNWSAAREEGVSRVAKARYMHTIEKSPPSYLFAFLSGFYNITAERACELVDPNSNPCEQDKNIPMISDIETLMARYGKNAEIIPMDVLVFLSSYARFKNNEGKEYKLQARSSRGVPDFPDNGRTALYNALTAAHVKRRKISIVVGRSIDTS.

The 286-residue stretch at 152-437 folds into the Tyr recombinase Flp-type domain; it reads LGNKINDEIT…VFLSSYARFK (286 aa). Tyrosine 358 (O-(3'-phospho-DNA)-tyrosine intermediate) is an active-site residue.

The protein belongs to the 'phage' integrase family.

Functionally, catalyzes the recombination between the large inverted repetitions of the plasmid. This is Recombinase Flp protein (R) from Zygosaccharomyces rouxii.